The primary structure comprises 270 residues: dTDP-6-deoxy-L-talose 4-dehydrogenase (NAD(+)) (270 aa).

Residues 11–12, 50–51, 72–76, N87, T112, Y135, and K139 contribute to the NAD(+) site; these read YI, DI, and LAWQA. Residues T112 and Y135 each contribute to the substrate site. Y135 serves as the catalytic Proton acceptor.

This sequence belongs to the NAD(P)-dependent epimerase/dehydratase family.

It catalyses the reaction dTDP-6-deoxy-beta-L-talose + NAD(+) = dTDP-4-dehydro-beta-L-rhamnose + NADH + H(+). It participates in bacterial outer membrane biogenesis; LPS O-antigen biosynthesis. Functionally, catalyzes the reduction of dTDP-6-deoxy-L-lyxo-4-hexulose to dTDP-6-deoxy-L-talose. This is dTDP-6-deoxy-L-talose 4-dehydrogenase (NAD(+)) (tll) from Aggregatibacter actinomycetemcomitans (Actinobacillus actinomycetemcomitans).